The following is a 306-amino-acid chain: tRNA dimethylallyltransferase (306 aa).

14–21 (GPTAAGKS) serves as a coordination point for ATP. 16–21 (TAAGKS) provides a ligand contact to substrate. The interaction with substrate tRNA stretch occupies residues 39–42 (DSRL).

This sequence belongs to the IPP transferase family. As to quaternary structure, monomer. Requires Mg(2+) as cofactor.

It catalyses the reaction adenosine(37) in tRNA + dimethylallyl diphosphate = N(6)-dimethylallyladenosine(37) in tRNA + diphosphate. Functionally, catalyzes the transfer of a dimethylallyl group onto the adenine at position 37 in tRNAs that read codons beginning with uridine, leading to the formation of N6-(dimethylallyl)adenosine (i(6)A). In Synechococcus sp. (strain ATCC 27144 / PCC 6301 / SAUG 1402/1) (Anacystis nidulans), this protein is tRNA dimethylallyltransferase.